The sequence spans 266 residues: Interleukin-33 (266 aa).

The tract at residues 1–67 is homeodomain-like HTH domain; sequence MRPRMKYSNS…ETSYFRKEPT (67 aa). A propeptide spanning residues 1-101 is cleaved from the precursor; that stretch reads MRPRMKYSNS…RSLLGSIQAF (101 aa). The segment at 66 to 108 is interaction with RELA; sequence PTKRYSLKSGTKHEENFSAYPRDSRKRSLLGSIQAFAASVDTL.

Belongs to the IL-1 family. Highly divergent. (Microbial infection) Interacts (in reduced form) with H.polygyrus ARI; the interaction abolishes the interaction with its primary receptor IL1RL1. As to quaternary structure, forms a 1:1:1 heterotrimeric complex with its primary high-affinity receptor IL1RL1 and the coreceptor IL1RAP. Interacts with cargo receptor TMED10; the interaction mediates the translocation from the cytoplasm into the ERGIC (endoplasmic reticulum-Golgi intermediate compartment) and thereby secretion. The full-length protein can be released from cells and is able to signal via the IL1RL1/ST2 receptor. However, proteolytic processing by CELA1, CSTG/cathepsin G and ELANE/neutrophil elastase produces C-terminal peptides that are more active than the unprocessed full-length protein. May also be proteolytically processed by calpains. Proteolytic cleavage mediated by apoptotic caspases including CASP3 and CASP7 results in IL33 inactivation. In vitro proteolytic cleavage by CASP1 was reported but could not be confirmed in vivo suggesting that IL33 is probably not a direct substrate for that caspase.

It is found in the nucleus. The protein localises to the chromosome. Its subcellular location is the cytoplasm. It localises to the cytoplasmic vesicle. The protein resides in the secretory vesicle. It is found in the secreted. Functionally, cytokine that binds to and signals through the IL1RL1/ST2 receptor which in turn activates NF-kappa-B and MAPK signaling pathways in target cells. Involved in the maturation of Th2 cells inducing the secretion of T-helper type 2-associated cytokines. Also involved in activation of mast cells, basophils, eosinophils and natural killer cells. Acts as an enhancer of polarization of alternatively activated macrophages. Acts as a chemoattractant for Th2 cells, and may function as an 'alarmin', that amplifies immune responses during tissue injury. Induces rapid UCP2-dependent mitochondrial rewiring that attenuates the generation of reactive oxygen species and preserves the integrity of Krebs cycle required for persistent production of itaconate and subsequent GATA3-dependent differentiation of inflammation-resolving alternatively activated macrophages. In terms of biological role, in quiescent endothelia the uncleaved form is constitutively and abundantly expressed, and acts as a chromatin-associated nuclear factor with transcriptional repressor properties, it may sequester nuclear NF-kappaB/RELA, lowering expression of its targets. This form is rapidely lost upon angiogenic or pro-inflammatory activation. This chain is Interleukin-33, found in Mus musculus (Mouse).